Here is a 572-residue protein sequence, read N- to C-terminus: Zyxin (572 aa).

An N-acetylalanine modification is found at alanine 2. The interval 23 to 351 (QKKFGPVVAP…VRSPGAPGPL (329 aa)) is disordered. Pro residues-rich tracts occupy residues 63–78 (IPPP…PPPL) and 93–108 (FPPP…PPAP). Phosphoserine occurs at positions 116, 142, 143, 169, and 170. Residues 143–156 (SIDLEIDSLSSLLD) show a composition bias toward low complexity. Threonine 179 is modified (phosphothreonine). Over residues 202–239 (SPSSSQPLPQVPAPAQSQTQFHVQPQPQPKPQVQLHVQ) the composition is skewed to low complexity. The segment covering 240-252 (SQTQPVSLANTQP) has biased composition (polar residues). The residue at position 253 (arginine 253) is an Asymmetric dimethylarginine. The segment covering 253-265 (RGPPASSPAPAPK) has biased composition (pro residues). Residue serine 259 is modified to Phosphoserine. Lysine 265 carries the post-translational modification N6-acetyllysine. The residue at position 267 (serine 267) is a Phosphoserine. At threonine 270 the chain carries Phosphothreonine. Lysine 272 is subject to N6-acetyllysine. The residue at position 274 (threonine 274) is a Phosphothreonine. Lysine 279 carries the N6-acetyllysine modification. 3 positions are modified to phosphoserine: serine 281, serine 288, and serine 308. Over residues 305–318 (GTGSPQPPSFTYAQ) the composition is skewed to polar residues. The span at 319–330 (QREKPRVQEKQH) shows a compositional bias: basic and acidic residues. Position 344 is a phosphoserine (serine 344). LIM zinc-binding domains are found at residues 384–443 (CGRC…TLEK), 444–503 (CNTC…YAPR), and 504–570 (CSVC…TARA).

It belongs to the zyxin/ajuba family. In terms of assembly, interacts with HPV type 6 protein E6. Does not interact significantly with E6 proteins from HPV types 11, 16, or 18. Interacts, via the Pro-rich regions, with the EVH1 domains of ENAH, EVL and VASP. Interacts with the first LIM domain of TES. Interacts with NEBL (isoform 2). Interacts with SYNPO2. As to quaternary structure, (Microbial infection) Interacts with human papillomavirus type 6/HPV6 protein E6. Does not interact significantly with E6 proteins from HPV types 11, 16, or 18.

Its subcellular location is the cytoplasm. It is found in the cytoskeleton. The protein localises to the nucleus. It localises to the cell junction. The protein resides in the focal adhesion. Its function is as follows. Adhesion plaque protein. Binds alpha-actinin and the CRP protein. Important for targeting TES and ENA/VASP family members to focal adhesions and for the formation of actin-rich structures. May be a component of a signal transduction pathway that mediates adhesion-stimulated changes in gene expression. The sequence is that of Zyxin (ZYX) from Homo sapiens (Human).